We begin with the raw amino-acid sequence, 967 residues long: MSFAVGQRWISDTESELGLGTVVQIEGRMVTLLFPATGENRMFAMAEAPLTRVIYNPGDTIDSAEGWGMTVDKVEELNGLVFYLGKRTDTGEDTMLRETLLEHNIRFNKPQDRLYAGQIDRIERFGVRYKAQLLRHKQATSPLLGLQGPRVGLIPHQLWIAHEVGRRHAPRVLLADEVGLGKTIEAGLIIHQQLMTGRAERVLVIVPDTLRHQWLVEMLRRFNLRFSVFDEDRCVEAFADHDNPFYTEQLVICSLELLRKKRRLEQALDADWDLMVVDEAHHLEWSEDEPSRAYQVVEALAEVVPGVLLLTATPDQLGHQSHFARLRLLDPDRFYDYQAFLDEEKGYQAVAEAADALASGIKLSDEAINGLTELLSEKDIAPAIRQIQAENLDEELRQAARDELLQELLDRHGTGRVLFRNSRASVKGFPKREFHSHGFELPEQYVTAMRVNAMMGGARTQEARVAQALSPERIYQEFDDNNASWWKFDPRVDWLIDFLKSHRSKKVLVIASRAETALALEEALRTREGIQATVFHEGMSIIERDKAGAYFAQEEGGAQALICSEIGSEGRNFQFASQLVLFDLPLNPDLLEQRIGRLDRIGQRHDVQIHLPFLKHTAQEQLMHWYHEGLCAFELTCPGGHVLFGEFKERLLSVLTGESDELDELMADTKARYKALKAAMEQGRDKLLELNSHGGAKAEAITASLSDADEDTDLIASVIRLWDVIGIDQDDKGENSIVLRTTEHMMYPTYPGLNEDGVTVTFDRNTALSRDDIALITLEHPLVQTGLDLITGSDTGTTCVALLKNKALPAGTIFLELIYLAETTAPKASQLYRYLPPTPVRVLLDKNGNNLSDKVDYDSFDKQLSGVNRHIASKLVNASQTMLHPLFAKGEEFAGEALETLTQDARARMESQLGAELSRLEALKAVNPSIREEELEHLRNMMQELSGYLGNTQLKLDAIRLVLVSHN.

In terms of domain architecture, Helicase ATP-binding spans 163-332 (EVGRRHAPRV…FARLRLLDPD (170 aa)). 176–183 (DEVGLGKT) is a binding site for ATP. Residues 278–281 (DEAH) carry the DEAH box motif. A Helicase C-terminal domain is found at 491-639 (RVDWLIDFLK…LCAFELTCPG (149 aa)).

The protein belongs to the SNF2/RAD54 helicase family. RapA subfamily. As to quaternary structure, interacts with the RNAP. Has a higher affinity for the core RNAP than for the holoenzyme. Its ATPase activity is stimulated by binding to RNAP.

Its function is as follows. Transcription regulator that activates transcription by stimulating RNA polymerase (RNAP) recycling in case of stress conditions such as supercoiled DNA or high salt concentrations. Probably acts by releasing the RNAP, when it is trapped or immobilized on tightly supercoiled DNA. Does not activate transcription on linear DNA. Probably not involved in DNA repair. This chain is RNA polymerase-associated protein RapA, found in Shewanella amazonensis (strain ATCC BAA-1098 / SB2B).